The chain runs to 338 residues: tRNA dimethylallyltransferase (338 aa).

Residue Gly-13 to Thr-20 coordinates ATP. Thr-15–Thr-20 provides a ligand contact to substrate. 2 interaction with substrate tRNA regions span residues Asp-38–Leu-41 and Gln-162–Arg-166.

This sequence belongs to the IPP transferase family. As to quaternary structure, monomer. Mg(2+) serves as cofactor.

It catalyses the reaction adenosine(37) in tRNA + dimethylallyl diphosphate = N(6)-dimethylallyladenosine(37) in tRNA + diphosphate. Its function is as follows. Catalyzes the transfer of a dimethylallyl group onto the adenine at position 37 in tRNAs that read codons beginning with uridine, leading to the formation of N6-(dimethylallyl)adenosine (i(6)A). In Cellvibrio japonicus (strain Ueda107) (Pseudomonas fluorescens subsp. cellulosa), this protein is tRNA dimethylallyltransferase.